A 34-amino-acid polypeptide reads, in one-letter code: uncharacterized protein (34 aa).

The helical transmembrane segment at 10-30 (LIITSSFFAIAAVLVLSVLLI) threads the bilayer.

The protein localises to the membrane. This is an uncharacterized protein from Escherichia coli O6:H1 (strain CFT073 / ATCC 700928 / UPEC).